The sequence spans 461 residues: Lysosomal dipeptide transporter MFSD1 (461 aa).

Residues 1-13 (MADREEHQGLLDG) show a composition bias toward basic and acidic residues. The interval 1–22 (MADREEHQGLLDGDRDEDEGDK) is disordered. A Dileucine internalization motif motif is present at residues 10 to 11 (LL). Helical transmembrane passes span 37 to 57 (LLHR…SYFC), 81 to 101 (QLYA…GFLL), 111 to 131 (TVIF…GALA), 134 to 154 (FWLM…LAVA), 264 to 284 (LWLI…FIGL), 302 to 322 (AINS…GFLV), 331 to 351 (WVML…FTFW), 359 to 379 (LLGV…AFVV), 390 to 410 (FMQS…GSIL), and 416 to 436 (LFLE…VVLL).

This sequence belongs to the major facilitator superfamily. As to quaternary structure, homodimer. Interacts with lysosomal protein GLMP (via lumenal domain); the interaction starts while both proteins are still in the endoplasmic reticulum and is required for stabilization of MFSD1 in lysosomes but has no direct effect on its targeting to lysosomes or transporter activity.

It localises to the lysosome membrane. It catalyses the reaction L-alpha-aminoacyl-L-arginine(out) = L-alpha-aminoacyl-L-arginine(in). The catalysed reaction is L-arginyl-L-alpha-amino acid(out) = L-arginyl-L-alpha-amino acid(in). The enzyme catalyses L-arginyl-glycine(out) = L-arginyl-glycine(in). It carries out the reaction L-alpha-aminoacyl-L-lysine(out) = L-alpha-aminoacyl-L-lysine(in). It catalyses the reaction L-aspartyl-L-lysine(out) = L-aspartyl-L-lysine(in). The catalysed reaction is L-alanyl-L-lysine(out) = L-alanyl-L-lysine(in). The enzyme catalyses L-lysyl-L-alpha-amino acid(out) = L-lysyl-L-alpha-amino acid(in). It carries out the reaction L-lysyl-L-alanine(out) = L-lysyl-L-alanine(in). It catalyses the reaction L-lysyl-L-lysine(out) = L-lysyl-L-lysine(in). The catalysed reaction is L-lysyl-glycine(out) = L-lysyl-glycine(in). The enzyme catalyses L-alpha-aminoacyl-L-histidine(out) = L-alpha-aminoacyl-L-histidine(in). It carries out the reaction L-histidyl-L-alpha-amino acid(out) = L-histidyl-L-alpha-amino acid(in). It catalyses the reaction L-histidyl-glycine(out) = L-histidyl-glycine(in). Its function is as follows. Lysosomal dipeptide uniporter that selectively exports lysine, arginine or histidine-containing dipeptides with a net positive charge from the lysosome lumen into the cytosol. Could play a role in a specific type of protein O-glycosylation indirectly regulating macrophages migration and tissue invasion. Also essential for liver homeostasis. This is Lysosomal dipeptide transporter MFSD1 (mfsd1) from Danio rerio (Zebrafish).